Here is a 331-residue protein sequence, read N- to C-terminus: Type 2 lactosamine alpha-2,3-sialyltransferase (331 aa).

Residues 1–4 (MKGY) are Cytoplasmic-facing. Residues 5–25 (VVAIFLSSIFLYYVLYCILWG) form a helical; Signal-anchor for type II membrane protein membrane-spanning segment. The Lumenal segment spans residues 26–331 (TNGYWFPNEE…KKMVINLTQN (306 aa)). N-linked (GlcNAc...) asparagine glycans are attached at residues N129, N181, N295, N308, and N327.

Belongs to the glycosyltransferase 29 family.

Its subcellular location is the golgi apparatus membrane. It carries out the reaction a neolactoside nLc4Cer(d18:1(4E)) + CMP-N-acetyl-beta-neuraminate = a neolactoside IV(3)-alpha-NeuAc-nLc4Cer(d18:1(4E)) + CMP + H(+). The enzyme catalyses a beta-D-galactosyl-(1-&gt;4)-N-acetyl-beta-D-glucosaminyl derivative + CMP-N-acetyl-beta-neuraminate = an N-acetyl-alpha-neuraminyl-(2-&gt;3)-beta-D-galactosyl-(1-&gt;4)-N-acetyl-beta-D-glucosaminyl derivative + CMP + H(+). It catalyses the reaction a neolactoside nLc6Cer(d18:1(4E)) + CMP-N-acetyl-beta-neuraminate = a neolactoside VI(3)-alpha-NeuNAc-nLc6Cer(d18:1(4E)) + CMP + H(+). In terms of biological role, transfers the sialyl residue from CMP-N-acetyl-beta-neuraminate to the terminal galactose residue on sugar chains of glycoproteins and glycolipids. It's alpha-2,3-sialyltransferase activity is specific toward type II glycan chains (Galbeta1-4GlcNAc) on glycoproteins and glycolipids such as neolactosides nLc4Cer and nLc6Cer, whose sialyl-products serve as precursors for the Lewis X antigen. Critically involved in the synthesis of functional selectin ligands needed for neutrophil recruitment during inflammation and lymphocyte homing to the lymph nodes. The protein is Type 2 lactosamine alpha-2,3-sialyltransferase (St3gal6) of Rattus norvegicus (Rat).